The sequence spans 117 residues: DNA-directed RNA polymerase II subunit RPB11 (117 aa).

Met-1 carries the N-acetylmethionine modification.

The protein belongs to the archaeal Rpo11/eukaryotic RPB11/RPC19 RNA polymerase subunit family. Component of the RNA polymerase II (Pol II) core complex consisting of 12 subunits: a ten-subunit catalytic core composed of POLR2A/RPB1, POLR2B/RPB2, POLR2C/RPB3, POLR2I/RPB9, POLR2J/RPB11, POLR2E/RPABC1, POLR2F/RPABC2, POLR2H/RPABC3, POLR2K/RPABC4 and POLR2L/RPABC5 and a mobile stalk composed of two subunits POLR2D/RPB4 and POLR2G/RPB7, protruding from the core and functioning primarily in transcription initiation. Part of Pol II(G) complex, in which Pol II core associates with an additional subunit POLR2M; unlike conventional Pol II, Pol II(G) functions as a transcriptional repressor. Part of TBP-based Pol II pre-initiation complex (PIC), in which Pol II core assembles with general transcription factors and other specific initiation factors including GTF2E1, GTF2E2, GTF2F1, GTF2F2, TCEA1, ERCC2, ERCC3, GTF2H2, GTF2H3, GTF2H4, GTF2H5, GTF2A1, GTF2A2, GTF2B and TBP; this large multi-subunit PIC complex mediates DNA unwinding and targets Pol II core to the transcription start site where the first phosphodiester bond forms. Interacts with PTPN6; this interaction promotes the recruitment of RNA pol II to the PCK1 promoter.

The protein localises to the nucleus. Its function is as follows. DNA-dependent RNA polymerase catalyzes the transcription of DNA into RNA using the four ribonucleoside triphosphates as substrates. Component of RNA polymerase II which synthesizes mRNA precursors and many functional non-coding RNAs. Pol II is the central component of the basal RNA polymerase II transcription machinery. It is composed of mobile elements that move relative to each other. POLR2J/RPB11 is part of the core element with the central large cleft. The chain is DNA-directed RNA polymerase II subunit RPB11 (POLR2J) from Bos taurus (Bovine).